The chain runs to 361 residues: Mitochondrial import receptor subunit TOM40 homolog (361 aa).

Positions 1–10 (MGNVLAASSP) are enriched in low complexity. Residues 1–71 (MGNVLAASSP…AASAGGTADD (71 aa)) form a disordered region. The segment covering 11 to 36 (PAGPPPPPAPPLVGLPPPPPSPPGFT) has biased composition (pro residues). Over residues 40–52 (LGGGLGAGAGTGR) the composition is skewed to gly residues. Residues 59–71 (GTAAASAGGTADD) are compositionally biased toward low complexity.

Belongs to the Tom40 family. In terms of assembly, forms part of the preprotein translocase complex of the outer mitochondrial membrane (TOM complex) which consists of at least 7 different proteins (TOMM5, TOMM6, TOMM7, TOMM20, TOMM22, TOMM40 and TOMM70). Interacts with mitochondrial targeting sequences. Interacts with TIMM29; linking the TIM22 complex to the TOM complex. Forms a complex with BCAP31 (via C-terminus) which mediates the translocation of components of the mitochondrial membrane respiratory chain NADH dehydrogenase (Complex I) from the cytosol to the mitochondria. Interacts (via N-terminus) with CYP1A1 (via mitochondrial targeting signal); this interaction is required for CYP1A1 translocation across the mitochondrial outer membrane.

Its subcellular location is the mitochondrion outer membrane. Its function is as follows. Channel-forming protein essential for import of protein precursors into mitochondria. Plays a role in the assembly of the mitochondrial membrane respiratory chain NADH dehydrogenase (Complex I) by forming a complex with BCAP31 and mediating the translocation of Complex I components from the cytosol to the mitochondria. In Bos taurus (Bovine), this protein is Mitochondrial import receptor subunit TOM40 homolog.